Consider the following 468-residue polypeptide: Glycine--tRNA ligase (468 aa).

Positions 101 and 170 each coordinate substrate. ATP is bound by residues 202–204 (RNE), 212–217 (FRTREF), 289–290 (EL), and 333–336 (GLTR). Residue 217 to 221 (FEQME) participates in substrate binding. 329 to 333 (EPAAG) lines the substrate pocket.

The protein belongs to the class-II aminoacyl-tRNA synthetase family. As to quaternary structure, homodimer.

It is found in the cytoplasm. It carries out the reaction tRNA(Gly) + glycine + ATP = glycyl-tRNA(Gly) + AMP + diphosphate. In terms of biological role, catalyzes the attachment of glycine to tRNA(Gly). The chain is Glycine--tRNA ligase from Mycolicibacterium vanbaalenii (strain DSM 7251 / JCM 13017 / BCRC 16820 / KCTC 9966 / NRRL B-24157 / PYR-1) (Mycobacterium vanbaalenii).